Here is a 606-residue protein sequence, read N- to C-terminus: UPF0329 protein ECU06_0090 (606 aa).

The tract at residues 317–401 is disordered; the sequence is KKEEERREEE…SREACSKERN (85 aa). Residues 328-353 show a composition bias toward basic and acidic residues; the sequence is EKKRKEEVVQRNVEELLRGEEEEKKG. Basic residues predominate over residues 354-367; it reads AKAKRKSKKKKKGS. Positions 381 to 401 are enriched in basic and acidic residues; it reads SENREAQEMEDSREACSKERN.

The protein belongs to the UPF0329 family.

This is UPF0329 protein ECU06_0090 from Encephalitozoon cuniculi (strain GB-M1) (Microsporidian parasite).